The sequence spans 502 residues: Archaemetzincin-1 (502 aa).

A Zn(2+)-binding site is contributed by His262. Glu263 acts as the Proton acceptor in catalysis. Residues His266, Cys273, Cys278, Cys297, and Cys300 each contribute to the Zn(2+) site. A disordered region spans residues 336 to 383; that stretch reads GEPSVSEDTLPFSADSGMGCESDTEPVTSPSEPVTPDGWSHPFPDGPE.

This sequence belongs to the peptidase M54 family. Zn(2+) is required as a cofactor.

In terms of biological role, probable zinc metalloprotease. The sequence is that of Archaemetzincin-1 (Amz1) from Mus musculus (Mouse).